The primary structure comprises 829 residues: Translation initiation factor IF-2 (829 aa).

Positions 128–137 are enriched in basic and acidic residues; the sequence is QNAEEEKVEA. The interval 128–157 is disordered; it reads QNAEEEKVEASAKTVQNNEDIQPQTSKKKE. The segment covering 140 to 152 has biased composition (polar residues); that stretch reads KTVQNNEDIQPQT. Positions 327–497 constitute a tr-type G domain; that stretch reads TRAPVVTVMG…LLIAEMQDLK (171 aa). Residues 336-343 are G1; the sequence is GHVDHGKT. 336-343 contacts GTP; the sequence is GHVDHGKT. The interval 361 to 365 is G2; sequence GITQH. A G3 region spans residues 383–386; that stretch reads DTPG. Residues 383–387 and 437–440 contribute to the GTP site; these read DTPGH and NKID. The tract at residues 437–440 is G4; that stretch reads NKID. The tract at residues 473–475 is G5; it reads SAL.

It belongs to the TRAFAC class translation factor GTPase superfamily. Classic translation factor GTPase family. IF-2 subfamily.

Its subcellular location is the cytoplasm. In terms of biological role, one of the essential components for the initiation of protein synthesis. Protects formylmethionyl-tRNA from spontaneous hydrolysis and promotes its binding to the 30S ribosomal subunits. Also involved in the hydrolysis of GTP during the formation of the 70S ribosomal complex. The chain is Translation initiation factor IF-2 from Rickettsia felis (strain ATCC VR-1525 / URRWXCal2) (Rickettsia azadi).